The primary structure comprises 215 residues: Protein GrpE (215 aa).

The segment covering 1-28 (MKHTSDTPSNSDMPSDSQATQPNASATG) has biased composition (polar residues). Residues 1–52 (MKHTSDTPSNSDMPSDSQATQPNASATGQAAHAYSSQAQRASADAQAVAGDE) form a disordered region. A compositionally biased stretch (low complexity) spans 29–52 (QAAHAYSSQAQRASADAQAVAGDE).

It belongs to the GrpE family. In terms of assembly, homodimer.

It localises to the cytoplasm. Functionally, participates actively in the response to hyperosmotic and heat shock by preventing the aggregation of stress-denatured proteins, in association with DnaK and GrpE. It is the nucleotide exchange factor for DnaK and may function as a thermosensor. Unfolded proteins bind initially to DnaJ; upon interaction with the DnaJ-bound protein, DnaK hydrolyzes its bound ATP, resulting in the formation of a stable complex. GrpE releases ADP from DnaK; ATP binding to DnaK triggers the release of the substrate protein, thus completing the reaction cycle. Several rounds of ATP-dependent interactions between DnaJ, DnaK and GrpE are required for fully efficient folding. The protein is Protein GrpE of Ralstonia pickettii (strain 12J).